We begin with the raw amino-acid sequence, 233 residues long: MKVGIIGAMEEEVNLLRNELTERVDTEIANYHFYEGYLGNMQVVILKSGIGKVNAAIGTTLLIDKFKPDVVINTGSAGGFKKGMKVGDVVVSTEVRHHDVDVTAFGYEYGQVPGMPPAYEADAKLVSVCKDVIENLPDVNVHQGLIVTGDSFINDSKRVADILGHFDGVAAVEMEAAPIAQTCYQFGVPFVVTRSISDSADEEANLSFDEFLETASINSAKMVMAVTKRLEQA.

Catalysis depends on Glu-12, which acts as the Proton acceptor. Substrate-binding positions include Gly-78, Ile-153, and 174 to 175; that span reads ME. Asp-198 acts as the Proton donor in catalysis.

Belongs to the PNP/UDP phosphorylase family. MtnN subfamily.

It carries out the reaction S-adenosyl-L-homocysteine + H2O = S-(5-deoxy-D-ribos-5-yl)-L-homocysteine + adenine. The enzyme catalyses S-methyl-5'-thioadenosine + H2O = 5-(methylsulfanyl)-D-ribose + adenine. It catalyses the reaction 5'-deoxyadenosine + H2O = 5-deoxy-D-ribose + adenine. It participates in amino-acid biosynthesis; L-methionine biosynthesis via salvage pathway; S-methyl-5-thio-alpha-D-ribose 1-phosphate from S-methyl-5'-thioadenosine (hydrolase route): step 1/2. Its function is as follows. Catalyzes the irreversible cleavage of the glycosidic bond in both 5'-methylthioadenosine (MTA) and S-adenosylhomocysteine (SAH/AdoHcy) to adenine and the corresponding thioribose, 5'-methylthioribose and S-ribosylhomocysteine, respectively. Also cleaves 5'-deoxyadenosine, a toxic by-product of radical S-adenosylmethionine (SAM) enzymes, into 5-deoxyribose and adenine. The protein is 5'-methylthioadenosine/S-adenosylhomocysteine nucleosidase of Exiguobacterium sp. (strain ATCC BAA-1283 / AT1b).